Consider the following 2209-residue polypeptide: MDEYVQELKGLIRKHIPDRCEFAHQKVTFLSQVHPSPLLTEGFKLLSSLVELESCEAHACQANTDQRFVDVILSDNGILCPTLPKVIPDGFKLTGKTLILLETFVRVNPDEFEKKWKADMSKLLNLKHDLQKSGVTLVPIVDGRSNYNNRFVADWVIERMRWLLIEILKASKSMLEIDIEDQEYQRLIHSLSNVKNQSLGLENLEHLKRNSLDYDERLNESLFIGLKGDIRESTVREELIKLKMWFKDEVFSKGLGKFKLTDRRELLESLSSLGAHLDSDVSSCPFCNNKLMEIVYNVTFSSVERTDGAATVDQQFSTTHTNIEKHYLSVLSLCNKIKGLKVFNTRRNTLLFLDLIMVNLMVDISESCQDAIESLRKSGLIVGQMVMLVNDRVLDILEAIKLIRKKIGTNPNWVKNCSKILERSHPEIWLQLNTLIRQPDFNSLISIAQYLVSDRPIMRYSVERGSDKICRHKLFQEMSSFEQMRLFKTLSSISLSLINSMKTSFSSRLLVNEREFSKYFGNVRLRECYAQRFYLAESLVGFLFYQKTGERSRCYSVYLSDNGVMSEQGSFYCDPKRFFLPVFSDEVLAGMCEEMTSWLDFDTGLMNDTGPILRLLVLAILCSPSKRNQTFLQGLRYFLMAFANQIHHIDLISKLVVECKSSSEVVVQRLAVGLFIRLLGGESDASSFFSRRFKYLLNVSYLCHLITKETPDRLTDQIKCFEKFIEPKVKFGCAVVNPSLNGKLTVDQEDIMINGLKKFFSKSLRDTEDVQTPGVCKELLNYCVSLFNRGKLKVSGELKNNPFRPNITSTALDLSSNKSVVIPKLDELGNILSTYDKEKLVSACVSSMAERFKTKGRYNLDPESTDYLILKNLTGLVSAGPKAKSSQEELSLMYETLTEEQVESFNEIKYDVQVALAKMADNSVNTRIKNLGRADNSVKNGNNPLDNLWSPFGVMKEIRAEVSLHEVKDFDPDVLPSDVYKELCDAVYKSSEKCNFFLEEVLDVCPLGLLLKNLTTSSYMEEEYFMCFKYLLIQGHFDQKLGSYEHKSRSRLGFTDETLRLKDEVRLSIRESNSEAIADKLDKSYFTNAALRNLCFYSEDSPTEFTSISSNSGNLKFGLSYKEQVGSNRELYVGDLNTKLMTRLVEDFSEAVGNSMKYTCLNSEKEFERAICDMKMAVNNGDLSCSYDHSKWGPTMSPALFLALLQMLELRTPVDRSKIDLDSVKSILKWHLHKVVEVPINVAEAYCIGKLKRSLGLMGCGSTSLSEEFFHQTMQLSGQIPSHIMSVLDMGQGILHNTSDLYGLITEQFLCYALDLLYDVIPVSYTSSDDQITLVKTPSLDIEGGSDAAEWLEMICFHEFLSSKLNKFVSPKSVIGTFVAEFKSRFFVMGEETPLLTKFVSAALHNVKCKTPTQLSETIDTICDQCIANGVSTKIVARISKRVNQLIRYSGYGDTPFGAIEDQDVKDWVDGSRGYRLQRKIEAIFYDDKETSFIRNCARKVFNDIKRGRIFEENLINLIGRGGDEALTGFLQYAGCSEQEVNRVLNYRWVNLSSFGDLRLVLRTKLMTSRRVLEREEVPTLIKTLQSKLSRNFTKGVKKILAESINKSAFQSSVASGFIGFCKSMGSKCVRDGKGGFLYIKEVYSGINVCICEICALKPKIIYCNDSLNKVSQFSKPILWDYFSLVLTNACELGEWVFSTVKEPQKPLVLNNQNFFWAVKPKVVRQIEDQLGMNHVLQSIRRNYPVLFDEHLAPFMNDLQVSRTMDSGRLKFLDVCIALDMMNENLGIISHLLKTRDNSVYIVKQSDCALAHIRQSSYTDWELGLSPQQICTNFKTQLVLSSMVNPLVLSTSCLKSFFWFNEVLELEDDSQIELAELTDFALMVKNQNVSRAMFVEDIAMGYVVSNFEGVRISLSNVMVDGVQLPPKEKAPDVGVLFGLKAENVIVGLVVQIDHVRMSTKFKLRRKMVYSFSLECTMDVGDIQNKEVILKVVAVDQSVSGSGGNHMLLDGVPVIASLPLFTGQASFDLAAMLIESNLAGSNDNFLMSNVTLDLGGFSPELSDKYSYRLSGPENQEDPLVLKDGAFYVGGERLSTYKVELTGDLVVKALGALEDDEGVVSMLHQLWPYLKATSQVILFQQEDFTIVHDLYKIQLTKSIESFGEWIEFTNFKVAYSKSLKELVISDTQGSFRLKGVMCRPLANTLQVEDIE.

Residues 26 to 284 (KVTFLSQVHP…AHLDSDVSSC (259 aa)) are endonuclease. Residues Glu51, Asp89, and Glu102 each contribute to the Mn(2+) site. Residue Lys115 is part of the active site. Residues 1172–1369 (CDMKMAVNNG…FLSSKLNKFV (198 aa)) form the RdRp catalytic domain. Residue Asp1330 participates in Mg(2+) binding.

This sequence belongs to the Bunyavirales RNA polymerase family. Homomultimer; the oligomeric structure is essential for the polymerase activity. Interacts with nucleoprotein N. Interacts with protein Z; this interaction inhibits viral transcription and replication, Z partially blocks the product exit tunnel for the releasing nascent RNA product. Requires Mn(2+) as cofactor. Mg(2+) is required as a cofactor.

It localises to the virion. The protein localises to the host cytoplasm. It catalyses the reaction RNA(n) + a ribonucleoside 5'-triphosphate = RNA(n+1) + diphosphate. RNA-dependent RNA polymerase, which is responsible for the replication and transcription of the viral RNA genome using antigenomic RNA as an intermediate. During transcription, synthesizes subgenomic RNAs and assures their capping by a cap-snatching mechanism, which involves the endonuclease activity cleaving the host capped pre-mRNAs. These short capped RNAs are then used as primers for viral transcription. The 3'-end of subgenomic mRNAs molecules are heterogeneous and not polyadenylated. The replicase function is to direct synthesis of antigenomic and genomic RNA which are encapsidated and non capped. As a consequence of the use of the same enzyme for both transcription and replication, these mechanisms need to be well coordinated. These processes may be regulated by proteins N and Z in a dose-dependent manner. Z protein inhibits the viral polymerase L und thus the viral transcription and RNA synthesis. The polypeptide is RNA-directed RNA polymerase L (Calomys callosus (Large vesper mouse)).